The following is a 245-amino-acid chain: tRNA1(Val) (adenine(37)-N6)-methyltransferase (245 aa).

This sequence belongs to the methyltransferase superfamily. tRNA (adenine-N(6)-)-methyltransferase family.

It is found in the cytoplasm. It carries out the reaction adenosine(37) in tRNA1(Val) + S-adenosyl-L-methionine = N(6)-methyladenosine(37) in tRNA1(Val) + S-adenosyl-L-homocysteine + H(+). In terms of biological role, specifically methylates the adenine in position 37 of tRNA(1)(Val) (anticodon cmo5UAC). This chain is tRNA1(Val) (adenine(37)-N6)-methyltransferase, found in Enterobacter sp. (strain 638).